Here is a 377-residue protein sequence, read N- to C-terminus: Serine protease grass (377 aa).

The first 26 residues, 1–26 (MMIASSLAVLYGIAIVSSMGVQSARA), serve as a signal peptide directing secretion. A Clip domain is found at 31-89 (DCTTPDGDQGQCMPFSSCRTIEERLTEAQKAGQKVPADYASYLQKALCGEFNGVRHFCC). 6 disulfide bridges follow: C32-C88, C42-C78, C48-C89, C111-C243, C148-C164, and C188-C197. The interval 91–118 (SANIQHNSKVMSLFKDENFDCGNFLSQR) is linker. The region spanning 119–373 (VSNGYEVKLS…YVQWITDTMA (255 aa)) is the Peptidase S1 domain. H163 functions as the Charge relay system in the catalytic mechanism. Ca(2+) is bound by residues E179, R181, T184, and D187. The active-site Charge relay system is D223. N-linked (GlcNAc...) asparagine glycans are attached at residues N230 and N270. 2 disulfides stabilise this stretch: C290–C304 and C314–C349. S318 serves as the catalytic Charge relay system.

Belongs to the peptidase S1 family. CLIP subfamily. Proteolytically cleaved by a tryspin-like protease which is likely to activate grass.

It is found in the secreted. In terms of biological role, endopeptidase. Plays a key role in innate immunity by activating the Toll pathway in response to fungal and Gram-positive bacterial infections, presumably downstream of pattern-recognition receptors (PRR), such as PGRP-SA, GNBP1 and GNBP3, and upstream of spz processing enzyme SPE. The sequence is that of Serine protease grass from Drosophila melanogaster (Fruit fly).